A 234-amino-acid chain; its full sequence is DNA repair protein RecO (234 aa).

This sequence belongs to the RecO family.

In terms of biological role, involved in DNA repair and RecF pathway recombination. The chain is DNA repair protein RecO from Idiomarina loihiensis (strain ATCC BAA-735 / DSM 15497 / L2-TR).